The sequence spans 546 residues: Probable malate:quinone oxidoreductase (546 aa).

Belongs to the MQO family. Requires FAD as cofactor.

The enzyme catalyses (S)-malate + a quinone = a quinol + oxaloacetate. It participates in carbohydrate metabolism; tricarboxylic acid cycle; oxaloacetate from (S)-malate (quinone route): step 1/1. In Acinetobacter baumannii (strain AB0057), this protein is Probable malate:quinone oxidoreductase.